Consider the following 545-residue polypeptide: Esterase-5B (545 aa).

An N-terminal signal peptide occupies residues 1–19 (MYCAKLILLLGCFWISSSA). A disulfide bridge links C84 with C103. Residue N113 is glycosylated (N-linked (GlcNAc...) asparagine). The active-site Acyl-ester intermediate is the S207. A disulfide bond links C259 and C271. N-linked (GlcNAc...) asparagine glycosylation occurs at N421. Catalysis depends on H467, which acts as the Charge relay system. N507 carries N-linked (GlcNAc...) asparagine glycosylation. Residues C515 and C536 are joined by a disulfide bond.

It belongs to the type-B carboxylesterase/lipase family. In terms of assembly, homodimer.

It localises to the secreted. It catalyses the reaction a carboxylic ester + H2O = an alcohol + a carboxylate + H(+). This chain is Esterase-5B (Est-5B), found in Drosophila persimilis (Fruit fly).